A 426-amino-acid polypeptide reads, in one-letter code: Enolase (426 aa).

Gln163 provides a ligand contact to (2R)-2-phosphoglycerate. Glu205 functions as the Proton donor in the catalytic mechanism. Asp242, Glu285, and Asp312 together coordinate Mg(2+). Positions 337, 366, 367, and 388 each coordinate (2R)-2-phosphoglycerate. Lys337 functions as the Proton acceptor in the catalytic mechanism.

The protein belongs to the enolase family. Mg(2+) serves as cofactor.

It is found in the cytoplasm. It localises to the secreted. Its subcellular location is the cell surface. It catalyses the reaction (2R)-2-phosphoglycerate = phosphoenolpyruvate + H2O. It participates in carbohydrate degradation; glycolysis; pyruvate from D-glyceraldehyde 3-phosphate: step 4/5. Catalyzes the reversible conversion of 2-phosphoglycerate (2-PG) into phosphoenolpyruvate (PEP). It is essential for the degradation of carbohydrates via glycolysis. The polypeptide is Enolase (Gluconacetobacter diazotrophicus (strain ATCC 49037 / DSM 5601 / CCUG 37298 / CIP 103539 / LMG 7603 / PAl5)).